The sequence spans 338 residues: Mitochondrial amidoxime reducing component 2 (338 aa).

The transit peptide at 1–35 (MGSSSSTALARLGLPGQPRSTWLGVAALGLAAVAL) directs the protein to the mitochondrion. Glycyl lysine isopeptide (Lys-Gly) (interchain with G-Cter in ubiquitin) cross-links involve residues K59, K138, and K144. An N6-acetyllysine; alternate modification is found at K156. K156 is covalently cross-linked (Glycyl lysine isopeptide (Lys-Gly) (interchain with G-Cter in ubiquitin); alternate). Glycyl lysine isopeptide (Lys-Gly) (interchain with G-Cter in ubiquitin) cross-links involve residues K173, K187, K289, and K296. The MOSC domain maps to 188–336 (GRTTKKLYPS…LRVGDPVYRM (149 aa)).

Component of a complex composed of cytochrome b5, NADH-cytochrome b5 reductase (CYB5R3) and MTARC2. Mo-molybdopterin serves as cofactor. Ubiquitinated by PRKN during mitophagy, leading to its degradation and enhancement of mitophagy. Deubiquitinated by USP30.

Its subcellular location is the mitochondrion outer membrane. It localises to the peroxisome. It catalyses the reaction N(omega)-hydroxy-L-arginine + 2 Fe(II)-[cytochrome b5] + 2 H(+) = L-arginine + 2 Fe(III)-[cytochrome b5] + H2O. In terms of biological role, catalyzes the reduction of N-oxygenated molecules, acting as a counterpart of cytochrome P450 and flavin-containing monooxygenases in metabolic cycles. As a component of prodrug-converting system, reduces a multitude of N-hydroxylated prodrugs particularly amidoximes, leading to increased drug bioavailability. May be involved in mitochondrial N(omega)-hydroxy-L-arginine (NOHA) reduction, regulating endogenous nitric oxide levels and biosynthesis. Postulated to cleave the N-OH bond of N-hydroxylated substrates in concert with electron transfer from NADH to cytochrome b5 reductase then to cytochrome b5, the ultimate electron donor that primes the active site for substrate reduction. This chain is Mitochondrial amidoxime reducing component 2 (Mtarc2), found in Rattus norvegicus (Rat).